A 602-amino-acid polypeptide reads, in one-letter code: uncharacterized protein (602 aa).

A Helicase ATP-binding domain is found at 51–210 (QYLGTQPRDF…PFVSYQPDAD (160 aa)). Positions 430 to 439 (PHRESAHDPL) are enriched in basic and acidic residues. 2 disordered regions span residues 430-452 (PHRE…TERG) and 518-538 (RAQL…ASVH). The segment covering 523–534 (KGATQPATSGAS) has biased composition (polar residues).

The protein to M.leprae ML1624.

This is an uncharacterized protein from Mycobacterium tuberculosis (strain CDC 1551 / Oshkosh).